The following is a 190-amino-acid chain: MEAETKTLPLENASILSEGSLQEGHRLWIGNLDPKITEYHLLKLLQKFGKVKQFDFLFHKSGALEGQPRGYCFVNFETKQEAEQAIQCLNGKLALSKKLVVRWAHAQVKRYDHNKNDKILPISLEPSSSTEPTQSNLSVTAKIKAIEAKLKMMAENPDAEYPAAPVYSYFKPPDKKRTTPYSRTAWKSRR.

Residues 25–106 (HRLWIGNLDP…KKLVVRWAHA (82 aa)) form the RRM domain. A disordered region spans residues 166-190 (VYSYFKPPDKKRTTPYSRTAWKSRR).

This chain is Probable RNA-binding protein 18 (RBM18), found in Pongo abelii (Sumatran orangutan).